We begin with the raw amino-acid sequence, 842 residues long: Outer membrane usher protein LpfC (842 aa).

The signal sequence occupies residues 1 to 21; it reads MTWTHLPLGNKTSRFTQSALA. The cysteines at positions 819 and 841 are disulfide-linked.

It belongs to the fimbrial export usher family.

The protein resides in the cell outer membrane. Functionally, involved in the export and assembly of LpfA fimbrial subunits across the outer membrane. The protein is Outer membrane usher protein LpfC (lpfC) of Salmonella typhimurium (strain LT2 / SGSC1412 / ATCC 700720).